Consider the following 474-residue polypeptide: CUGBP Elav-like family member 4 (474 aa).

The segment at 1–287 (MYIKMATLAN…AAFAAAQMQQ (287 aa)) is sufficient for RNA-binding and MSE-dependent splicing activity. Positions 18–28 (LSTNGLGSSPG) are enriched in polar residues. A disordered region spans residues 18-41 (LSTNGLGSSPGSAGHMNGLSHSPG). RRM domains lie at 54 to 135 (IKLF…PADS) and 141 to 221 (RKLF…FADT). Residues 228-247 (RRMQQMAGQMGMFNPMAIPF) form a necessary for TNNT2 exon 5 inclusion region. In terms of domain architecture, RRM 3 spans 392-467 (PQPPPMIPQQ…KRLKVQLKRP (76 aa)).

It belongs to the CELF/BRUNOL family.

It localises to the nucleus. Its subcellular location is the cytoplasm. Its function is as follows. RNA-binding protein implicated in the regulation of pre-mRNA alternative splicing. Mediates exon inclusion and/or exclusion in pre-mRNA that are subject to tissue-specific and developmentally regulated alternative splicing. Specifically activates exon 5 inclusion of cardiac isoforms of TNNT2 during heart remodeling at the juvenile to adult transition. Promotes exclusion of both the smooth muscle (SM) and non-muscle (NM) exons in actinin pre-mRNAs. Activates the splicing of MAPT/Tau exon 10. Binds to muscle-specific splicing enhancer (MSE) intronic sites flanking the alternative exon 5 of TNNT2 pre-mRNA. The polypeptide is CUGBP Elav-like family member 4 (CELF4) (Macaca fascicularis (Crab-eating macaque)).